Consider the following 228-residue polypeptide: Glycerol-3-phosphate acyltransferase (228 aa).

6 helical membrane passes run 1 to 21 (MINW…LGAT), 56 to 76 (VPAL…IALV), 104 to 124 (MVII…WIGF), 136 to 156 (ILLA…IVVL), 161 to 181 (IVSL…FFTG), and 183 to 203 (PLPY…RHIS).

This sequence belongs to the PlsY family. In terms of assembly, probably interacts with PlsX.

It localises to the cell inner membrane. The enzyme catalyses an acyl phosphate + sn-glycerol 3-phosphate = a 1-acyl-sn-glycero-3-phosphate + phosphate. It participates in lipid metabolism; phospholipid metabolism. In terms of biological role, catalyzes the transfer of an acyl group from acyl-phosphate (acyl-PO(4)) to glycerol-3-phosphate (G3P) to form lysophosphatidic acid (LPA). This enzyme utilizes acyl-phosphate as fatty acyl donor, but not acyl-CoA or acyl-ACP. The protein is Glycerol-3-phosphate acyltransferase of Trichodesmium erythraeum (strain IMS101).